The chain runs to 347 residues: UPF0284 protein SSO2213 (347 aa).

Belongs to the UPF0284 family.

In Saccharolobus solfataricus (strain ATCC 35092 / DSM 1617 / JCM 11322 / P2) (Sulfolobus solfataricus), this protein is UPF0284 protein SSO2213.